Here is a 423-residue protein sequence, read N- to C-terminus: Sulfate adenylyltransferase (423 aa).

It belongs to the sulfate adenylyltransferase family.

The enzyme catalyses sulfate + ATP + H(+) = adenosine 5'-phosphosulfate + diphosphate. Its pathway is sulfur metabolism; hydrogen sulfide biosynthesis; sulfite from sulfate: step 1/3. The protein is Sulfate adenylyltransferase of Desulfovibrio desulfuricans (strain ATCC 27774 / DSM 6949 / MB).